The following is a 126-amino-acid chain: Protein ApaG (126 aa).

The region spanning 2 to 126 (ADKLYQMEVQ…MTLVAPRVLH (125 aa)) is the ApaG domain.

This is Protein ApaG from Chromobacterium violaceum (strain ATCC 12472 / DSM 30191 / JCM 1249 / CCUG 213 / NBRC 12614 / NCIMB 9131 / NCTC 9757 / MK).